Reading from the N-terminus, the 80-residue chain is Inner kinetochore subunit MHF2 (80 aa).

It belongs to the CENP-X/MHF2 family. The MHF histone-fold complex is a heterotetramer of 2 MHF1-MHF2 heterodimers. Together with MPH1/FANCM, forms the FANCM-MHF complex. Component of the inner kinetochore constitutive centromere-associated network (CCAN) (also known as central kinetochore CTF19 complex in yeast), which is composed of at least AME1, CHL4, CNN1, CTF3, CTF19, IML3, MCM16, MCM21, MCM22, MHF1, MHF2, MIF2, NKP1, NKP2, OKP1 and WIP1.

In terms of biological role, DNA-binding component of a FANCM-MHF complex involved in DNA damage repair and genome maintenance. FANCM-MHF promotes gene conversion at blocked replication forks, probably by reversal of the stalled fork. Component of the kinetochore, a multiprotein complex that assembles on centromeric DNA and attaches chromosomes to spindle microtubules, mediating chromosome segregation and sister chromatid segregation during meiosis and mitosis. Component of the inner kinetochore constitutive centromere-associated network (CCAN), which serves as a structural platform for outer kinetochore assembly. In Saccharomyces cerevisiae (strain ATCC 204508 / S288c) (Baker's yeast), this protein is Inner kinetochore subunit MHF2.